The primary structure comprises 659 residues: ATP-binding cassette sub-family D member 3 (659 aa).

The segment at 2 to 61 is interaction with PEX19; that stretch reads AAFSKYLTARNSSLAGAAFLLFCLLHKRRRALGLHGKKSGKPPLQNNEKEGKKERAVVDK. Asparagine 12 carries an N-linked (GlcNAc...) asparagine glycan. Lysine 61 bears the N6-acetyllysine mark. Residues 84–104 traverse the membrane as a helical segment; sequence GYLILIAVMLVSRTYCDVWMI. Residues 85–372 form the ABC transmembrane type-1 domain; sequence YLILIAVMLV…MLLRMSQALG (288 aa). Asparagine 106 carries an N-linked (GlcNAc...) asparagine glycan. Residues 126–146 form a helical membrane-spanning segment; that stretch reads LFNFIAAMPLISLVNNFLKYG. An N-linked (GlcNAc...) asparagine glycan is attached at asparagine 206. A helical membrane pass occupies residues 224–244; sequence AIGAQGPASMMAYLLVSGLFL. Lysine 260 carries the N6-acetyllysine modification. Residues 313–333 traverse the membrane as a helical segment; sequence MGFIDSIIAKYIATVVGYLVV. At lysine 399 the chain carries N6-acetyllysine. At serine 424 the chain carries Phosphoserine. An ABC transporter domain is found at 434–659; the sequence is INADNIIKFD…ITEDTVEFGS (226 aa). An ATP-binding site is contributed by 473-480; sequence GPNGCGKS. The residue at position 533 (lysine 533) is an N6-acetyllysine. Serine 659 is subject to Phosphoserine.

The protein belongs to the ABC transporter superfamily. ABCD family. Peroxisomal fatty acyl CoA transporter (TC 3.A.1.203) subfamily. In terms of assembly, homodimers. Can form heterodimers with ABCD1 and ABCD2. Dimerization is necessary to form an active transporter. Interacts with PEX19; mediates the targeting of ABCD3 to peroxisomes. Ubiquitinated by PEX2 during pexophagy in response to starvation, leading to its degradation.

Its subcellular location is the peroxisome membrane. The enzyme catalyses a very long-chain fatty acyl-CoA + H2O = a very long-chain fatty acid + CoA + H(+). The catalysed reaction is a very long-chain fatty acid(in) + ATP + H2O = a very long-chain fatty acid(out) + ADP + phosphate + H(+). It catalyses the reaction a long-chain fatty acyl-CoA + H2O = a long-chain fatty acid + CoA + H(+). It carries out the reaction a long-chain fatty acid(in) + ATP + H2O = a long-chain fatty acid(out) + ADP + phosphate + H(+). The enzyme catalyses pristanoyl-CoA + H2O = 2,6,10,14-tetramethylpentadecanoate + CoA + H(+). The catalysed reaction is 2,6,10,14-tetramethylpentadecanoate(in) + ATP + H2O = 2,6,10,14-tetramethylpentadecanoate(out) + ADP + phosphate + H(+). It catalyses the reaction hexadecanedioyl-CoA + H2O = hexadecanedioate + CoA + H(+). It carries out the reaction hexadecanedioate(in) + ATP + H2O = hexadecanedioate(out) + ADP + phosphate + H(+). The enzyme catalyses (5Z,8Z,11Z,14Z,17Z)-eicosapentaenoyl-CoA + H2O = (5Z,8Z,11Z,14Z,17Z)-eicosapentaenoate + CoA + H(+). The catalysed reaction is (5Z,8Z,11Z,14Z,17Z)-eicosapentaenoate(in) + ATP + H2O = (5Z,8Z,11Z,14Z,17Z)-eicosapentaenoate(out) + ADP + phosphate + H(+). It catalyses the reaction (4Z,7Z,10Z,13Z,16Z,19Z)-docosahexaenoyl-CoA + H2O = (4Z,7Z,10Z,13Z,16Z,19Z)-docosahexaenoate + CoA + H(+). It carries out the reaction (4Z,7Z,10Z,13Z,16Z,19Z)-docosahexaenoate(in) + ATP + H2O = (4Z,7Z,10Z,13Z,16Z,19Z)-docosahexaenoate(out) + ADP + phosphate + H(+). In terms of biological role, broad substrate specificity ATP-dependent transporter of the ATP-binding cassette (ABC) family that catalyzes the transport of long-chain fatty acids (LCFA)-CoA, dicarboxylic acids-CoA, long-branched-chain fatty acids-CoA and bile acids from the cytosol to the peroxisome lumen for beta-oxydation. Has fatty acyl-CoA thioesterase and ATPase activities. Probably hydrolyzes fatty acyl-CoAs into free fatty acids prior to their ATP-dependent transport into peroxisomes. Thus, play a role in regulation of LCFAs and energy metabolism namely, in the degradation and biosynthesis of fatty acids by beta-oxidation. This chain is ATP-binding cassette sub-family D member 3 (Abcd3), found in Rattus norvegicus (Rat).